Reading from the N-terminus, the 322-residue chain is Homoserine kinase (322 aa).

ATP is bound at residue 107–117 (PLSSGMGGSAA).

It belongs to the GHMP kinase family. Homoserine kinase subfamily.

It localises to the cytoplasm. The enzyme catalyses L-homoserine + ATP = O-phospho-L-homoserine + ADP + H(+). Its pathway is amino-acid biosynthesis; L-threonine biosynthesis; L-threonine from L-aspartate: step 4/5. Functionally, catalyzes the ATP-dependent phosphorylation of L-homoserine to L-homoserine phosphate. This Xylella fastidiosa (strain 9a5c) protein is Homoserine kinase.